The sequence spans 173 residues: Large ribosomal RNA subunit accumulation protein YceD (173 aa).

The protein belongs to the DUF177 domain family.

In terms of biological role, plays a role in synthesis, processing and/or stability of 23S rRNA. The sequence is that of Large ribosomal RNA subunit accumulation protein YceD (yceD) from Escherichia coli O157:H7.